The chain runs to 561 residues: Acylcarnitine hydrolase (561 aa).

A signal peptide spans 1 to 26 (MARKQPHSWLNAVLFGLLLILIHVWG). A disulfide bond links Cys-97 and Cys-125. The Acyl-ester intermediate role is filled by Ser-230. A disulfide bridge connects residues Cys-282 and Cys-293. Active-site charge relay system residues include Glu-347 and His-459.

It belongs to the type-B carboxylesterase/lipase family. As to expression, expressed in liver, stomach and kidney.

The protein resides in the microsome. The protein localises to the endoplasmic reticulum. The catalysed reaction is all-trans-retinyl hexadecanoate + H2O = all-trans-retinol + hexadecanoate + H(+). It carries out the reaction an O-acyl-(R)-carnitine + H2O = (R)-carnitine + a fatty acid + H(+). Its function is as follows. Hydrolase with high activity towards palmitoylcarnitine. Is also active with p-nitrophenylacetate and alpha-naphthylacetate. May also hydrolyze retinyl esters. The sequence is that of Acylcarnitine hydrolase from Rattus norvegicus (Rat).